Reading from the N-terminus, the 145-residue chain is Transcription antitermination protein NusB (145 aa).

It belongs to the NusB family.

Involved in transcription antitermination. Required for transcription of ribosomal RNA (rRNA) genes. Binds specifically to the boxA antiterminator sequence of the ribosomal RNA (rrn) operons. This is Transcription antitermination protein NusB from Acetivibrio thermocellus (strain ATCC 27405 / DSM 1237 / JCM 9322 / NBRC 103400 / NCIMB 10682 / NRRL B-4536 / VPI 7372) (Clostridium thermocellum).